The chain runs to 472 residues: Transcriptional activator protein rec16 (472 aa).

The segment at 420–444 (FICCYCTKPFLSISKLQEHESSCSH) adopts a C2H2-type zinc-finger fold.

The protein localises to the nucleus. Functionally, transcriptional activator that controls the onset of premeiotic DNA synthesis by regulating res2 and some other factor(s) in a mei2 independent cascade. This chain is Transcriptional activator protein rec16 (rec16), found in Schizosaccharomyces pombe (strain 972 / ATCC 24843) (Fission yeast).